A 376-amino-acid chain; its full sequence is Ribonuclease D (376 aa).

The 3'-5' exonuclease domain occupies 8 to 176 (IQWIRDDASL…VYLALDARLS (169 aa)). The region spanning 214–294 (RPQQLAVLRE…AEAARLPQSE (81 aa)) is the HRDC domain.

The protein belongs to the RNase D family. Requires a divalent metal cation as cofactor.

It is found in the cytoplasm. It catalyses the reaction Exonucleolytic cleavage that removes extra residues from the 3'-terminus of tRNA to produce 5'-mononucleotides.. Functionally, exonuclease involved in the 3' processing of various precursor tRNAs. Initiates hydrolysis at the 3'-terminus of an RNA molecule and releases 5'-mononucleotides. This chain is Ribonuclease D, found in Pseudomonas paraeruginosa (strain DSM 24068 / PA7) (Pseudomonas aeruginosa (strain PA7)).